The chain runs to 159 residues: Large ribosomal subunit protein uL30 (159 aa).

This sequence belongs to the universal ribosomal protein uL30 family. In terms of assembly, part of the 50S ribosomal subunit.

The protein is Large ribosomal subunit protein uL30 of Aeropyrum pernix (strain ATCC 700893 / DSM 11879 / JCM 9820 / NBRC 100138 / K1).